A 303-amino-acid chain; its full sequence is Protoheme IX farnesyltransferase (303 aa).

Helical transmembrane passes span 30 to 50, 54 to 74, 101 to 121, 123 to 143, 150 to 170, 178 to 198, 219 to 241, 245 to 262, and 279 to 299; these read VMSL…STVS, AMIA…LNMW, ALIF…YFAN, ISAV…TIWL, NIVI…TIAT, ITFF…LSLY, STKI…PYAI, GLVF…YNIL, and AKTI…IFLI.

This sequence belongs to the UbiA prenyltransferase family. Protoheme IX farnesyltransferase subfamily.

It is found in the cell inner membrane. It catalyses the reaction heme b + (2E,6E)-farnesyl diphosphate + H2O = Fe(II)-heme o + diphosphate. It participates in porphyrin-containing compound metabolism; heme O biosynthesis; heme O from protoheme: step 1/1. Converts heme B (protoheme IX) to heme O by substitution of the vinyl group on carbon 2 of heme B porphyrin ring with a hydroxyethyl farnesyl side group. This chain is Protoheme IX farnesyltransferase, found in Pelagibacter ubique (strain HTCC1062).